A 450-amino-acid chain; its full sequence is Vacuolar cation/proton exchanger 1c (450 aa).

Topologically, residues 1 to 73 (MAPPESSHHH…LLGGPAAQLQ (73 aa)) are cytoplasmic. The tract at residues 28–52 (AAEEEEKKEAAAWTPSSSSSMTGRK) is disordered. A helical membrane pass occupies residues 74–94 (EVLLGTKLYPLFSAVPLAVAA). Residues 95-101 (ESLRLGR) are Extracellular-facing. The chain crosses the membrane as a helical span at residues 102 to 122 (VWVFAFSLIGLAPLAERVSFL). At 123-134 (SEHIANTVGPTA) the chain is on the cytoplasmic side. Residues 135–155 (GGIMNATCGNVPELIIALFAL) form a helical membrane-spanning segment. Positions 143–178 (GNVPELIIALFALHKNKMEILKWSLLGSILSNLLLV) are cation selection. The Extracellular portion of the chain corresponds to 156 to 170 (HKNKMEILKWSLLGS). Residues 171 to 191 (ILSNLLLVLGSSLLFGGIVNI) traverse the membrane as a helical segment. The Cytoplasmic portion of the chain corresponds to 192 to 201 (GKERPLDKRQ). A helical transmembrane segment spans residues 202–222 (ADVSIGLLLLGVLCHIATLVS). The Extracellular segment spans residues 223–239 (KYTSSTGDSINSSSVMQ). Residues 240–260 (LSRSCAIVMLIAYFGSLMFQL) form a helical membrane-spanning segment. The Cytoplasmic portion of the chain corresponds to 261–287 (KTHRQIFELEEDSSDSSSSEDDATDKS). A helical membrane pass occupies residues 288-308 (VIGFASAMVWLIGMAVVTAML). Residues 309–331 (SSYVVTTIEEASESMGIPVRFIS) are Extracellular-facing. The helical transmembrane segment at 332 to 352 (IILLPIVGNAAEHAGAIIFAF) threads the bilayer. The tract at residues 339-374 (GNAAEHAGAIIFAFKNKIDISLGITLGSATQISMLV) is cation selection. Residues 353–360 (KNKIDISL) are Cytoplasmic-facing. The chain crosses the membrane as a helical span at residues 361–381 (GITLGSATQISMLVVPVILIV). The Extracellular portion of the chain corresponds to 382 to 385 (SWVN). The chain crosses the membrane as a helical span at residues 386 to 406 (AIPMDLDFNLLETGSLAMAVI). The Cytoplasmic segment spans residues 407–424 (TTAFTLQDDKWHYLKGLN). Residues 425–445 (LVFSYIVIAVCFFVMKALPTL) form a helical membrane-spanning segment. Residues 446–450 (KKEDD) lie on the Extracellular side of the membrane.

Belongs to the Ca(2+):cation antiporter (CaCA) (TC 2.A.19) family. Cation/proton exchanger (CAX) subfamily. Expressed in leaf blades.

Its subcellular location is the vacuole membrane. Its function is as follows. Vacuolar cation/proton exchanger (CAX). Translocates Ca(2+) and other metal ions into vacuoles using the proton gradient formed by H(+)-ATPase and H(+)-pyrophosphatase. This chain is Vacuolar cation/proton exchanger 1c (CAX1c), found in Oryza sativa subsp. japonica (Rice).